The chain runs to 218 residues: Probable GTP-binding protein EngB (218 aa).

The 175-residue stretch at V31–P205 folds into the EngB-type G domain. GTP is bound by residues G39 to S46, G66 to L70, D84 to G87, T151 to D154, and F184 to S186. S46 and T68 together coordinate Mg(2+).

This sequence belongs to the TRAFAC class TrmE-Era-EngA-EngB-Septin-like GTPase superfamily. EngB GTPase family. Mg(2+) is required as a cofactor.

Its function is as follows. Necessary for normal cell division and for the maintenance of normal septation. The protein is Probable GTP-binding protein EngB of Shewanella loihica (strain ATCC BAA-1088 / PV-4).